A 535-amino-acid polypeptide reads, in one-letter code: WD repeat-containing protein 25 (535 aa).

Disordered stretches follow at residues 1–108 (MASL…PRPS) and 141–160 (DQST…RKRG). A compositionally biased stretch (polar residues) spans 141–155 (DQSTFESTAGNASSS). 7 WD repeats span residues 235 to 277 (GHRG…HCLQ), 281 to 320 (VHSE…QVFS), 321 to 362 (GQSD…VVKG), 365 to 411 (ATIQ…KISN), 415 to 454 (HERY…RMSR), 460 to 501 (GHKV…RACT), and 504 to 535 (GHTQ…KIWH).

The chain is WD repeat-containing protein 25 (Wdr25) from Mus musculus (Mouse).